The sequence spans 462 residues: Zinc finger CCCH domain-containing protein 34 (462 aa).

Residues 1-13 (MERYGRPGEEGSR) show a composition bias toward basic and acidic residues. The interval 1-26 (MERYGRPGEEGSRSDPSLEWTSHGGE) is disordered. C3H1-type zinc fingers lie at residues 54 to 82 (RPDE…HPRD), 100 to 128 (RMGH…HPRQ), and 148 to 176 (RPGE…HPVP). Residues 288-303 (TGTYQSVPSSNSTSKE) are compositionally biased toward polar residues. The segment at 288–310 (TGTYQSVPSSNSTSKEFPQRPDQ) is disordered. 2 C3H1-type zinc fingers span residues 307–335 (RPDQ…HPVD) and 353–381 (RPGV…HSMS). The segment covering 405–418 (SSSLSGSSAPVSSS) has biased composition (low complexity). The segment at 405-462 (SSSLSGSSAPVSSSNEPTKEAVTPAVSSMVSGLSRPEPAETSGDSASVSGSIEAKTSS) is disordered. Residues 446–462 (SGDSASVSGSIEAKTSS) are compositionally biased toward polar residues.

It is found in the nucleus. This is Zinc finger CCCH domain-containing protein 34 from Arabidopsis thaliana (Mouse-ear cress).